We begin with the raw amino-acid sequence, 360 residues long: tRNA-specific 2-thiouridylase MnmA (360 aa).

Residues 9 to 16 (AMSGGVDS) and Leu-35 contribute to the ATP site. Cys-104 (nucleophile) is an active-site residue. Cys-104 and Cys-197 form a disulfide bridge. An ATP-binding site is contributed by Gly-128. The interaction with tRNA stretch occupies residues 147-149 (KDQ). Cys-197 functions as the Cysteine persulfide intermediate in the catalytic mechanism.

The protein belongs to the MnmA/TRMU family.

It localises to the cytoplasm. The catalysed reaction is S-sulfanyl-L-cysteinyl-[protein] + uridine(34) in tRNA + AH2 + ATP = 2-thiouridine(34) in tRNA + L-cysteinyl-[protein] + A + AMP + diphosphate + H(+). In terms of biological role, catalyzes the 2-thiolation of uridine at the wobble position (U34) of tRNA, leading to the formation of s(2)U34. The protein is tRNA-specific 2-thiouridylase MnmA of Salinispora arenicola (strain CNS-205).